Reading from the N-terminus, the 266-residue chain is Calpain small subunit 1 (266 aa).

Met1 carries the N-acetylmethionine modification. Residue Ser6 is modified to Phosphoserine. One can recognise an EF-hand 1; atypical domain in the interval 94–128 (EEVRQFRRLFAQLAGDDMEVSATELMNILNKVVTR). Ca(2+) contacts are provided by Ala107, Asp110, Glu112, Glu117, Asp135, Asp150, Asp152, Thr154, Lys156, and Glu161. EF-hand domains are found at residues 137 to 170 (FGIDTCRSMVAVMDSDTTGKLGFEEFKYLWNNIK), 167 to 202 (NNIKKWQAIYKQFDVDRSGTIGSSELPGAFEAAGFH), 203 to 231 (LNEHLYSMIIRRYSDEGGNMDFDNFISCL), and 232 to 266 (VRLDAMFRAFKSLDKDGTGQIQVNIQEWLQLTMYS). Residue Lys177 is modified to N6-acetyllysine. Residues Asp180, Asp182, Ser184, Thr186, Glu191, and Asp223 each coordinate Ca(2+).

In terms of assembly, homodimer or heterodimer of a large (catalytic) and a small (regulatory) subunit. In presence of calcium, the heterodimer dissociates.

It is found in the cytoplasm. Its subcellular location is the cell membrane. Its function is as follows. Regulatory subunit of the calcium-regulated non-lysosomal thiol-protease which catalyzes limited proteolysis of substrates involved in cytoskeletal remodeling and signal transduction. Essential for embryonic development. In Sus scrofa (Pig), this protein is Calpain small subunit 1 (CAPNS1).